A 37-amino-acid chain; its full sequence is MKIRASIRKICEKCRLIRRRGRIIVICSNPRHKQRQG.

It belongs to the bacterial ribosomal protein bL36 family.

The protein localises to the plastid. Its subcellular location is the chloroplast. This is Large ribosomal subunit protein bL36c from Nicotiana tomentosiformis (Tobacco).